The primary structure comprises 555 residues: CTP synthase (555 aa).

The tract at residues 1–271 (MVKRGKKTKY…DDKLAELFNI (271 aa)) is amidoligase domain. Ser19 lines the CTP pocket. A UTP-binding site is contributed by Ser19. ATP contacts are provided by residues 20-25 (SLGKGL) and Asp77. Asp77 and Glu145 together coordinate Mg(2+). Residues 152–154 (DIE), 192–197 (KTKPTQ), and Lys228 contribute to the CTP site. UTP-binding positions include 192 to 197 (KTKPTQ) and Lys228. The 241-residue stretch at 297–537 (RIGIVGKYVE…VKAALEHRDA (241 aa)) folds into the Glutamine amidotransferase type-1 domain. Residue Gly358 coordinates L-glutamine. Cys385 serves as the catalytic Nucleophile; for glutamine hydrolysis. L-glutamine is bound by residues 386–389 (LGLQ), Glu409, and Arg466. Catalysis depends on residues His510 and Glu512. Positions 535 to 555 (RDAQQRQPPAEVKKLAVGKNG) are disordered.

It belongs to the CTP synthase family. Homotetramer.

It catalyses the reaction UTP + L-glutamine + ATP + H2O = CTP + L-glutamate + ADP + phosphate + 2 H(+). The catalysed reaction is L-glutamine + H2O = L-glutamate + NH4(+). The enzyme catalyses UTP + NH4(+) + ATP = CTP + ADP + phosphate + 2 H(+). It participates in pyrimidine metabolism; CTP biosynthesis via de novo pathway; CTP from UDP: step 2/2. Allosterically activated by GTP, when glutamine is the substrate; GTP has no effect on the reaction when ammonia is the substrate. The allosteric effector GTP functions by stabilizing the protein conformation that binds the tetrahedral intermediate(s) formed during glutamine hydrolysis. Inhibited by the product CTP, via allosteric rather than competitive inhibition. In terms of biological role, catalyzes the ATP-dependent amination of UTP to CTP with either L-glutamine or ammonia as the source of nitrogen. Regulates intracellular CTP levels through interactions with the four ribonucleotide triphosphates. This is CTP synthase from Anaeromyxobacter dehalogenans (strain 2CP-1 / ATCC BAA-258).